Here is a 178-residue protein sequence, read N- to C-terminus: Putative metal-dependent hydrolase GTNG_0529 (178 aa).

Zn(2+) is bound by residues His-68, His-161, and His-165.

This sequence belongs to the metal hydrolase YfiT family. In terms of assembly, homodimer. It depends on Zn(2+) as a cofactor.

The protein resides in the cytoplasm. Possible metal-dependent hydrolase. This Geobacillus thermodenitrificans (strain NG80-2) protein is Putative metal-dependent hydrolase GTNG_0529.